The chain runs to 280 residues: Bifunctional protein FolD (280 aa).

NADP(+)-binding positions include 166-168 and S191; that span reads GRS.

It belongs to the tetrahydrofolate dehydrogenase/cyclohydrolase family. As to quaternary structure, homodimer.

It catalyses the reaction (6R)-5,10-methylene-5,6,7,8-tetrahydrofolate + NADP(+) = (6R)-5,10-methenyltetrahydrofolate + NADPH. It carries out the reaction (6R)-5,10-methenyltetrahydrofolate + H2O = (6R)-10-formyltetrahydrofolate + H(+). It functions in the pathway one-carbon metabolism; tetrahydrofolate interconversion. In terms of biological role, catalyzes the oxidation of 5,10-methylenetetrahydrofolate to 5,10-methenyltetrahydrofolate and then the hydrolysis of 5,10-methenyltetrahydrofolate to 10-formyltetrahydrofolate. The protein is Bifunctional protein FolD of Marinomonas sp. (strain MWYL1).